The chain runs to 100 residues: Urease subunit gamma (100 aa).

The protein belongs to the urease gamma subunit family. In terms of assembly, heterotrimer of UreA (gamma), UreB (beta) and UreC (alpha) subunits. Three heterotrimers associate to form the active enzyme.

It localises to the cytoplasm. The enzyme catalyses urea + 2 H2O + H(+) = hydrogencarbonate + 2 NH4(+). Its pathway is nitrogen metabolism; urea degradation; CO(2) and NH(3) from urea (urease route): step 1/1. This Rhodopseudomonas palustris (strain BisB5) protein is Urease subunit gamma.